Here is a 316-residue protein sequence, read N- to C-terminus: Olfactory receptor 6B9 (316 aa).

The Extracellular segment spans residues M1–Q22. N-linked (GlcNAc...) asparagine glycosylation is found at N3 and N6. A helical membrane pass occupies residues I23–I43. Residues I44 to M64 are Cytoplasmic-facing. Residues S65–F85 traverse the membrane as a helical segment. Residues R86–T97 lie on the Extracellular side of the membrane. A disulfide bridge connects residues C95 and C187. The helical transmembrane segment at Q98–Y118 threads the bilayer. The Cytoplasmic portion of the chain corresponds to D119–V132. The helical transmembrane segment at M133–I153 threads the bilayer. At S154–A199 the chain is on the extracellular side. Residues L200–V220 form a helical membrane-spanning segment. Residues S221 to S237 lie on the Cytoplasmic side of the membrane. Residues T238–V258 traverse the membrane as a helical segment. The Extracellular segment spans residues R259–N269. A helical transmembrane segment spans residues K270–L290. Topologically, residues R291–S316 are cytoplasmic.

This sequence belongs to the G-protein coupled receptor 1 family. In terms of tissue distribution, olfactory epithelium.

Its subcellular location is the cell membrane. In terms of biological role, odorant receptor. This Mus musculus (Mouse) protein is Olfactory receptor 6B9.